Here is a 750-residue protein sequence, read N- to C-terminus: Photosystem I P700 chlorophyll a apoprotein A1 (750 aa).

8 helical membrane-spanning segments follow: residues 70 to 93 (IFSA…FHGA), 156 to 179 (LYCT…FHYH), 195 to 219 (LNHH…HVSL), 291 to 309 (TAHH…GHMY), 346 to 369 (WHAQ…HHMY), 385 to 411 (LSLF…IFMV), 433 to 455 (AIIS…LYIH), and 531 to 549 (FLVH…LILL). C573 and C582 together coordinate [4Fe-4S] cluster. 2 helical membrane passes run 589–610 (HVFL…HFSW) and 664–686 (LSAY…MFLF). H675 is a binding site for chlorophyll a'. Residues M683 and Y691 each contribute to the chlorophyll a site. W692 lines the phylloquinone pocket. The chain crosses the membrane as a helical span at residues 724-744 (AVGVTHYLLGGIATTWAFFLA).

The protein belongs to the PsaA/PsaB family. The PsaA/B heterodimer binds the P700 chlorophyll special pair and subsequent electron acceptors. PSI consists of a core antenna complex that captures photons, and an electron transfer chain that converts photonic excitation into a charge separation. The eukaryotic PSI reaction center is composed of at least 11 subunits. P700 is a chlorophyll a/chlorophyll a' dimer, A0 is one or more chlorophyll a, A1 is one or both phylloquinones and FX is a shared 4Fe-4S iron-sulfur center. serves as cofactor.

It localises to the plastid. The protein localises to the chloroplast thylakoid membrane. The enzyme catalyses reduced [plastocyanin] + hnu + oxidized [2Fe-2S]-[ferredoxin] = oxidized [plastocyanin] + reduced [2Fe-2S]-[ferredoxin]. In terms of biological role, psaA and PsaB bind P700, the primary electron donor of photosystem I (PSI), as well as the electron acceptors A0, A1 and FX. PSI is a plastocyanin-ferredoxin oxidoreductase, converting photonic excitation into a charge separation, which transfers an electron from the donor P700 chlorophyll pair to the spectroscopically characterized acceptors A0, A1, FX, FA and FB in turn. Oxidized P700 is reduced on the lumenal side of the thylakoid membrane by plastocyanin. The protein is Photosystem I P700 chlorophyll a apoprotein A1 of Spinacia oleracea (Spinach).